Here is a 61-residue protein sequence, read N- to C-terminus: U-poneritoxin(01)-Om5a (61 aa).

A signal peptide spans 1 to 23 (MKLSALSLAFAIILMMTIMYTKA). A propeptide spanning residues 24–41 (DADASADAEADADAEAEA) is cleaved from the precursor. A Glutamine amide modification is found at Q59.

This sequence belongs to the formicidae venom precursor-01 superfamily. Post-translationally, truncated sequences of this peptide have also been found in the venom. It is possible they have been cleaved in the venom. In terms of tissue distribution, expressed by the venom gland.

It localises to the secreted. Its function is as follows. Acidic peptide with potent hemolytic activities (94.8% at 50 uM). It also shows low antimicrobial activities against E.coli (MIC=50uM), as well as histamine-releasing activity (28.3% at 10 uM). Does not have activity against S.aureus, and S.cerevisiae. The protein is U-poneritoxin(01)-Om5a of Odontomachus monticola (Trap-jaw ant).